The following is a 486-amino-acid chain: Aspartyl/glutamyl-tRNA(Asn/Gln) amidotransferase subunit B (486 aa).

This sequence belongs to the GatB/GatE family. GatB subfamily. Heterotrimer of A, B and C subunits.

It carries out the reaction L-glutamyl-tRNA(Gln) + L-glutamine + ATP + H2O = L-glutaminyl-tRNA(Gln) + L-glutamate + ADP + phosphate + H(+). It catalyses the reaction L-aspartyl-tRNA(Asn) + L-glutamine + ATP + H2O = L-asparaginyl-tRNA(Asn) + L-glutamate + ADP + phosphate + 2 H(+). Functionally, allows the formation of correctly charged Asn-tRNA(Asn) or Gln-tRNA(Gln) through the transamidation of misacylated Asp-tRNA(Asn) or Glu-tRNA(Gln) in organisms which lack either or both of asparaginyl-tRNA or glutaminyl-tRNA synthetases. The reaction takes place in the presence of glutamine and ATP through an activated phospho-Asp-tRNA(Asn) or phospho-Glu-tRNA(Gln). This is Aspartyl/glutamyl-tRNA(Asn/Gln) amidotransferase subunit B from Leptospira borgpetersenii serovar Hardjo-bovis (strain JB197).